A 405-amino-acid polypeptide reads, in one-letter code: Plasma serine protease inhibitor (405 aa).

Residues 1-19 form the signal peptide; it reads MRFFPILCLVLFISHGVAS. Positions 20–24 are cleaved as a propeptide — removed in mature form; sequence RRHSH. N247 carries N-linked (GlcNAc...) asparagine glycosylation.

Belongs to the serpin family. Forms protease inhibiting heterodimers in extracellular body fluids with serine proteases such as activated protein C/coagulation factor V/F5, acrosin/ACR, chymotrypsinogen B/CTRB1, prothrombin/F2, factor Xa/F10, factor XI/F11, kallikrein/KLKB1, tissue kallikrein, trypsin/PRSS1, prostate specific antigen/KLK3, tissue plasminogen activator/PLAT and urinary plasminogen activator/PLAU. Forms membrane-anchored serine proteases inhibiting heterodimers with TMPRSS7 and TMPRSS11E. Interacts with SEMG2. N-glycosylated; glycans consist of a mixture of sialylated bi- (including sialyl-Lewis X epitopes), tri- and tetra-antennary complex-type chains; affects the maximal heparin- and thrombomodulin-enhanced rates of thrombin inhibition. O-glycosylated; further modified with 2 sialic acid residues. Proteolytically cleaved at the N-terminus; inhibits slightly the heparin- and thrombomodulin-enhanced rates of thrombin inhibition. Post-translationally, proteolytically cleaved. Inhibition of proteases is accompanied by formation of a stable enzyme-inhibitor complex and by degradation of the serpin to lower molecular weight derivatives. In terms of tissue distribution, not detected in blood plasma (at protein level). Expressed in testis, epididymis, seminal vesicles, prostate and ovaries.

It localises to the secreted. The protein resides in the extracellular space. Its inhibitory activity is greatly enhanced in the presence of glycosaminoglycans, heparin, thrombomodulin and phospholipids vesicles. Functionally, heparin-dependent serine protease inhibitor acting in body fluids and secretions. Inactivates serine proteases by binding irreversibly to their serine activation site. Involved in the regulation of intravascular and extravascular proteolytic activities. Plays hemostatic roles in the blood plasma. Acts as a procoagulant and pro-inflammatory factor by inhibiting the anticoagulant activated protein C factor as well as the generation of activated protein C factor by the thrombin/thrombomodulin complex. Acts as an anticoagulant factor by inhibiting blood coagulation factors like prothrombin, factor XI, factor Xa, plasma kallikrein and fibrinolytic enzymes such as tissue- and urinary-type plasminogen activators. In seminal plasma, inactivates several serine proteases implicated in the reproductive system. Inhibits the serpin acrosin; indirectly protects component of the male genital tract from being degraded by excessive released acrosin. Inhibits tissue- and urinary-type plasminogen activator, prostate-specific antigen and kallikrein activities; has a control on the sperm motility and fertilization. Inhibits the activated protein C-catalyzed degradation of SEMG1 and SEMG2; regulates the degradation of semenogelin during the process of transfer of spermatozoa from the male reproductive tract into the female tract. In urine, inhibits urinary-type plasminogen activator and kallikrein activities. Inactivates membrane-anchored serine proteases activities such as MPRSS7 and TMPRSS11E. Inhibits urinary-type plasminogen activator-dependent tumor cell invasion and metastasis. May also play a non-inhibitory role in seminal plasma and urine as a hydrophobic hormone carrier by its binding to retinoic acid. The chain is Plasma serine protease inhibitor (Serpina5) from Mus musculus (Mouse).